Consider the following 25-residue polypeptide: GVVDILKGAAKDIAGHLASKVMNKL.

At Leu25 the chain carries Leucine amide.

Belongs to the frog skin active peptide (FSAP) family. Ocellatin subfamily. Expressed by the skin glands.

The protein localises to the secreted. Antibacterial peptide that inhibits reference strains of both Gram-negative bacteria (E.coli, P.aeruginosa, E.cloacae, K.pneumoniae, and A.actinomycetemcomitans) and Gram-positive bacteria (S.aureus) with relatively low potencies (MIC=25-400 uM). Shows antifungal activity against C.lusitaniae (MIC=50.25 uM), but no activity against C.albicans. In the presence of an alkaloid (bufotenine), inhibits cellular infection by the rabies virus. The peptide shows very low hemolytic activity against rabbit erythrocytes. The low amphipathicity of alpha-helices demonstrated by wheel projection as well as the low cationicity may explain the low antibacterial and hemolytic potencies. In Leptodactylus labyrinthicus (Labyrinth frog), this protein is Ocellatin-F1.